The chain runs to 254 residues: Aspartate/glutamate leucyltransferase (254 aa).

The protein belongs to the R-transferase family. Bpt subfamily.

It localises to the cytoplasm. The catalysed reaction is N-terminal L-glutamyl-[protein] + L-leucyl-tRNA(Leu) = N-terminal L-leucyl-L-glutamyl-[protein] + tRNA(Leu) + H(+). It catalyses the reaction N-terminal L-aspartyl-[protein] + L-leucyl-tRNA(Leu) = N-terminal L-leucyl-L-aspartyl-[protein] + tRNA(Leu) + H(+). Its function is as follows. Functions in the N-end rule pathway of protein degradation where it conjugates Leu from its aminoacyl-tRNA to the N-termini of proteins containing an N-terminal aspartate or glutamate. This Mesorhizobium japonicum (strain LMG 29417 / CECT 9101 / MAFF 303099) (Mesorhizobium loti (strain MAFF 303099)) protein is Aspartate/glutamate leucyltransferase.